A 981-amino-acid chain; its full sequence is Anoctamin-3 (981 aa).

The span at 1 to 28 shows a compositional bias: polar residues; it reads MVHHSGSIQSFKQQKGMNISKSEITTEA. 2 disordered regions span residues 1–32 and 67–87; these read MVHH…SLKP and PTSV…EESR. Residues 1 to 403 are Cytoplasmic-facing; that stretch reads MVHHSGSIQS…LYFAWLGWYT (403 aa). The segment covering 76–87 has biased composition (basic and acidic residues); it reads DKPEHVTSEESR. The chain crosses the membrane as a helical span at residues 404-424; that stretch reads GMLIPAAVVGLCVFFYGLVTM. N-linked (GlcNAc...) asparagine glycosylation is found at N425, N448, and N455. Residues 425-469 are Extracellular-facing; that stretch reads NESQVSQEICKATEVFMCPLCDKNCSLQRLNDSCIYAKVTYLFDN. Residues 470–490 traverse the membrane as a helical segment; sequence GGTVFFAIFMAIWATVFLEFW. At 491-550 the chain is on the cytoplasmic side; the sequence is KRRRSILTYTWDLIEWEEEEETLRPQFEAKYYRMEVINPITGKPEPHQPSSDKVTRLLVS. A helical transmembrane segment spans residues 551–571; that stretch reads VSGIFFMISLVITAVFAVVVY. Residues 572–592 lie on the Extracellular side of the membrane; the sequence is RLVVMEQFASFKWNFVKQHWQ. The helical transmembrane segment at 593-613 threads the bilayer; the sequence is FATSGAAVCINFIIIMLLNLA. The Cytoplasmic portion of the chain corresponds to 614-640; the sequence is YEKIAYLLTNLEYPRTESEWENSFALK. The helical transmembrane segment at 641-661 threads the bilayer; the sequence is MFLFQFVNLNSSIFYIAFFLG. Residues 662 to 761 lie on the Extracellular side of the membrane; it reads RFVGHPGKYN…MDEYLEMVLQ (100 aa). A helical transmembrane segment spans residues 762 to 782; that stretch reads FGFTTIFVAAFPLAPLLALLN. The Cytoplasmic portion of the chain corresponds to 783–810; sequence NIIEIRLDAYKFVTQWRRPLPARATDIG. The chain crosses the membrane as a helical span at residues 811 to 831; sequence IWLGILEGIGILAVITNAFVI. The Extracellular portion of the chain corresponds to 832–914; sequence AITSDYIPRF…QYWHILAARL (83 aa). An N-linked (GlcNAc...) asparagine glycan is attached at N866. Residues 915 to 935 form a helical membrane-spanning segment; sequence AFIIVFEHLVFGIKSFIAYLI. Residues 936–981 are Cytoplasmic-facing; that stretch reads PDIPKGLRERIRREKYLVQEMMYEAELEHLQQQRRKSGQPIHHEWP.

This sequence belongs to the anoctamin family. As to quaternary structure, interacts with KCNT1/Slack. Predominantly expressed in neuronal tissues. Expressed in brain.

Its subcellular location is the cell membrane. The catalysed reaction is a 1,2-diacyl-sn-glycero-3-phosphocholine(in) = a 1,2-diacyl-sn-glycero-3-phosphocholine(out). It carries out the reaction a beta-D-galactosyl-(1&lt;-&gt;1')-N-acylsphing-4-enine(out) = a beta-D-galactosyl-(1&lt;-&gt;1')-N-acylsphing-4-enine(in). Functionally, has calcium-dependent phospholipid scramblase activity; scrambles phosphatidylcholine and galactosylceramide. Does not exhibit calcium-activated chloride channel (CaCC) activity. Seems to act as potassium channel regulator and may inhibit pain signaling; can facilitate KCNT1/Slack channel activity by promoting its full single-channel conductance at very low sodium concentrations and by increasing its sodium sensitivity. The protein is Anoctamin-3 of Mus musculus (Mouse).